The following is a 752-amino-acid chain: Translation initiation factor IF-2 (752 aa).

The segment covering 148–159 (KKVKDKNKKEEP) has biased composition (basic and acidic residues). The segment at 148 to 170 (KKVKDKNKKEEPAVTPSTAPRKK) is disordered. The tr-type G domain maps to 250–419 (PRPPIVTVMG…ALQAEIMELK (170 aa)). The tract at residues 259-266 (GHVDHGKT) is G1. 259–266 (GHVDHGKT) provides a ligand contact to GTP. Residues 284–288 (GITQH) form a G2 region. Positions 305–308 (DTPG) are G3. GTP is bound by residues 305–309 (DTPGH) and 359–362 (NKID). Residues 359–362 (NKID) form a G4 region. The interval 395–397 (SAK) is G5.

It belongs to the TRAFAC class translation factor GTPase superfamily. Classic translation factor GTPase family. IF-2 subfamily.

It localises to the cytoplasm. Its function is as follows. One of the essential components for the initiation of protein synthesis. Protects formylmethionyl-tRNA from spontaneous hydrolysis and promotes its binding to the 30S ribosomal subunits. Also involved in the hydrolysis of GTP during the formation of the 70S ribosomal complex. This Thermodesulfovibrio yellowstonii (strain ATCC 51303 / DSM 11347 / YP87) protein is Translation initiation factor IF-2.